A 637-amino-acid chain; its full sequence is Chloride intracellular channel protein 6 (637 aa).

A disordered region spans residues 1–400 (MAETAEPEGG…EASEEGDPGQ (400 aa)). The span at 35–63 (GPEASEGAAKAPSGEGAGAAAKAGATEEA) shows a compositional bias: low complexity. Serine 39 is subject to Phosphoserine. Basic and acidic residues predominate over residues 126–137 (CELRGEAAREAE). Positions 138 to 152 (GQAAAPAAPGAQEEA) are enriched in low complexity. A run of 15 repeats spans residues 155–160 (GDSVDA), 161–166 (EGSIDA), 167–172 (GGSVDA), 173–178 (AGSVDA), 179–184 (GGSIDA), 185–190 (GGSMDA), 191–196 (GGSVDA), 197–202 (GGSIDT), 203–208 (GGSVDA), 209–214 (AGSVDA), 215–220 (GGSIDT), 221–226 (GRNVDA), 227–232 (GGSIDA), 233–238 (GGSVDA), and 239–244 (GGSMDA). The interval 155-244 (GDSVDAEGSI…SVDAGGSMDA (90 aa)) is 15 X 6 AA tandem repeat of [GEA]-[DGR]-[SN]-[VIM]-D-[AT]. The span at 247–256 (PAGGAHGAGG) shows a compositional bias: gly residues. Positions 305 to 314 (GSEDAAGEDG) are enriched in acidic residues. Over residues 315–332 (DQGRPQEETEQQAERQEP) the composition is skewed to basic and acidic residues. Phosphoserine is present on residues serine 348 and serine 393. The short motif at 420–423 (CPFS) is the G-site element. Residues 422 to 442 (FSQRLFMILWLKGVIFNVTTV) form a helical membrane-spanning segment. The GST C-terminal domain maps to 466-637 (DGDVKTDVNK…AYSDVAKRMK (172 aa)).

This sequence belongs to the chloride channel CLIC family. As to quaternary structure, monomer (soluble state). Interacts with dopamine receptors DRD2, DRD3 and DRD4. In terms of processing, phosphorylated. In terms of tissue distribution, expressed in brain, chorioretinal, lacrimal glands, submandibular glands, airway epithelium, kidney and gastric mucosa, where it is preferentially expressed in cells that secrete or transport water. In brain, it is highly expressed in choroid plexus. Not detected in pancreas, adrenal glands, heart, skeletal muscle, ileal mucosa, liver and lung.

It is found in the cytoplasm. It localises to the cell membrane. The catalysed reaction is chloride(in) = chloride(out). Channel activity is redox- and pH-regulated. Inhibited by IAA-94. Functionally, in the soluble state, catalyzes glutaredoxin-like thiol disulfide exchange reactions with reduced glutathione as electron donor. Can insert into membranes and form voltage-dependent chloride-selective channels. The channel opens upon membrane depolarization at positive voltages and closes at negative membrane voltages. May play a critical role in water-secreting cells, possibly through the regulation of chloride ion transport. This is Chloride intracellular channel protein 6 (CLIC6) from Oryctolagus cuniculus (Rabbit).